The following is a 381-amino-acid chain: 6-oxocyclohex-1-ene-1-carbonyl-CoA hydrolase (381 aa).

The protein belongs to the enoyl-CoA hydratase/isomerase family. In terms of assembly, homohexamer.

The enzyme catalyses 6-oxocyclohex-1-ene-1-carbonyl-CoA + 2 H2O = 3-hydroxy-6-carboxyhexanoyl-CoA + H(+). It functions in the pathway aromatic compound metabolism; benzoyl-CoA degradation. Functionally, involved in the central benzoyl-CoA catabolism. Catalyzes the addition of one molecule of water to the double bond and the hydrolytic cleavage of C-C bond in the alicyclic ring, 6-oxocyclohex-1-ene-1-carbonyl-CoA (6-OCH-CoA) to yield 3-hydroxypimelyl-CoA. The polypeptide is 6-oxocyclohex-1-ene-1-carbonyl-CoA hydrolase (Geobacter metallireducens (strain ATCC 53774 / DSM 7210 / GS-15)).